A 96-amino-acid chain; its full sequence is Co-chaperonin GroES (96 aa).

The protein belongs to the GroES chaperonin family. As to quaternary structure, heptamer of 7 subunits arranged in a ring. Interacts with the chaperonin GroEL.

It localises to the cytoplasm. In terms of biological role, together with the chaperonin GroEL, plays an essential role in assisting protein folding. The GroEL-GroES system forms a nano-cage that allows encapsulation of the non-native substrate proteins and provides a physical environment optimized to promote and accelerate protein folding. GroES binds to the apical surface of the GroEL ring, thereby capping the opening of the GroEL channel. The sequence is that of Co-chaperonin GroES from Legionella micdadei (Tatlockia micdadei).